The chain runs to 293 residues: Signal recognition particle receptor FtsY (293 aa).

GTP is bound by residues 93 to 100 (GVNGAGKT), 175 to 179 (DTAGR), and 239 to 242 (TKLD).

Belongs to the GTP-binding SRP family. FtsY subfamily. In terms of assembly, part of the signal recognition particle protein translocation system, which is composed of SRP and FtsY. SRP is a ribonucleoprotein composed of Ffh and a 4.5S RNA molecule.

Its subcellular location is the cell inner membrane. It is found in the cytoplasm. It catalyses the reaction GTP + H2O = GDP + phosphate + H(+). Functionally, involved in targeting and insertion of nascent membrane proteins into the cytoplasmic membrane. Acts as a receptor for the complex formed by the signal recognition particle (SRP) and the ribosome-nascent chain (RNC). Interaction with SRP-RNC leads to the transfer of the RNC complex to the Sec translocase for insertion into the membrane, the hydrolysis of GTP by both Ffh and FtsY, and the dissociation of the SRP-FtsY complex into the individual components. This chain is Signal recognition particle receptor FtsY, found in Helicobacter pylori (strain J99 / ATCC 700824) (Campylobacter pylori J99).